We begin with the raw amino-acid sequence, 200 residues long: MSIKPPSALSELVEALRALPGVGPKSAQRIAYHLMQHDREGAERLGRSLLFATEHLRHCEKCNTFTEAQICEVCSDPERDPALLCVVETPADQIMLEQTMTYRGLYFVLMGRLSPLDGIGPKEIHFDRLVRRASDGIVKEVVLATNFTNEGEATAHYLGQTLKARGLAVTRLARGVPVGGELEYVDAGTIARAMLDRRTL.

The segment at 59-74 (CEKCNTFTEAQICEVC) adopts a C4-type zinc-finger fold. Residues 82–177 (ALLCVVETPA…AVTRLARGVP (96 aa)) enclose the Toprim domain.

Belongs to the RecR family.

In terms of biological role, may play a role in DNA repair. It seems to be involved in an RecBC-independent recombinational process of DNA repair. It may act with RecF and RecO. This Burkholderia mallei (strain NCTC 10247) protein is Recombination protein RecR.